The following is a 108-amino-acid chain: Phosphoribosyl-ATP pyrophosphatase (108 aa).

This sequence belongs to the PRA-PH family.

The protein localises to the cytoplasm. The catalysed reaction is 1-(5-phospho-beta-D-ribosyl)-ATP + H2O = 1-(5-phospho-beta-D-ribosyl)-5'-AMP + diphosphate + H(+). It participates in amino-acid biosynthesis; L-histidine biosynthesis; L-histidine from 5-phospho-alpha-D-ribose 1-diphosphate: step 2/9. The chain is Phosphoribosyl-ATP pyrophosphatase from Dechloromonas aromatica (strain RCB).